A 106-amino-acid chain; its full sequence is uncharacterized protein (106 aa).

A signal peptide spans 1–27 (MHHFVPSISLFMASVSFSVFFSHLATS). A helical membrane pass occupies residues 42 to 62 (TLFSMVPLINSSFNLSVFLFF).

It localises to the membrane. This is an uncharacterized protein from Saccharomyces cerevisiae (strain ATCC 204508 / S288c) (Baker's yeast).